The chain runs to 256 residues: 4-hydroxy-tetrahydrodipicolinate reductase (256 aa).

NAD(+) contacts are provided by residues G12 to V17, D39, G86 to T88, and A110 to Y113. H144 (proton donor/acceptor) is an active-site residue. H145 serves as a coordination point for (S)-2,3,4,5-tetrahydrodipicolinate. Catalysis depends on K148, which acts as the Proton donor. G154 to T155 is a (S)-2,3,4,5-tetrahydrodipicolinate binding site.

The protein belongs to the DapB family.

It is found in the cytoplasm. It carries out the reaction (S)-2,3,4,5-tetrahydrodipicolinate + NAD(+) + H2O = (2S,4S)-4-hydroxy-2,3,4,5-tetrahydrodipicolinate + NADH + H(+). It catalyses the reaction (S)-2,3,4,5-tetrahydrodipicolinate + NADP(+) + H2O = (2S,4S)-4-hydroxy-2,3,4,5-tetrahydrodipicolinate + NADPH + H(+). Its pathway is amino-acid biosynthesis; L-lysine biosynthesis via DAP pathway; (S)-tetrahydrodipicolinate from L-aspartate: step 4/4. Functionally, catalyzes the conversion of 4-hydroxy-tetrahydrodipicolinate (HTPA) to tetrahydrodipicolinate. This is 4-hydroxy-tetrahydrodipicolinate reductase from Gluconacetobacter diazotrophicus (strain ATCC 49037 / DSM 5601 / CCUG 37298 / CIP 103539 / LMG 7603 / PAl5).